The sequence spans 227 residues: Uracil-DNA glycosylase (227 aa).

The Proton acceptor role is filled by Asp-68.

This sequence belongs to the uracil-DNA glycosylase (UDG) superfamily. UNG family.

It localises to the cytoplasm. The enzyme catalyses Hydrolyzes single-stranded DNA or mismatched double-stranded DNA and polynucleotides, releasing free uracil.. In terms of biological role, excises uracil residues from the DNA which can arise as a result of misincorporation of dUMP residues by DNA polymerase or due to deamination of cytosine. This is Uracil-DNA glycosylase from Mycolicibacterium smegmatis (strain ATCC 700084 / mc(2)155) (Mycobacterium smegmatis).